A 194-amino-acid chain; its full sequence is Yellow fluorescent protein (194 aa).

2 Lumazine-binding repeats span residues 1–98 (MFKG…SGGH) and 99–194 (ILSA…NQCW). Residue 179-183 (KVNVE) coordinates FMN.

As to quaternary structure, homodimer. It depends on FMN as a cofactor.

Its function is as follows. Antenna protein that modulates the color of the bioluminescence emission of the luciferase. In the presence of YFP and only at temperatures below 20 degrees Celsius, luciferase exhibits a bimodal emission spectrum with a new peak at 545 nM (yellow), in addition to the one at 485 nM. This Aliivibrio fischeri (Vibrio fischeri) protein is Yellow fluorescent protein (luxY).